The chain runs to 237 residues: Ribonuclease PH (237 aa).

Residues Arg-86 and 124-126 (GTR) each bind phosphate.

Belongs to the RNase PH family. Homohexameric ring arranged as a trimer of dimers.

It catalyses the reaction tRNA(n+1) + phosphate = tRNA(n) + a ribonucleoside 5'-diphosphate. In terms of biological role, phosphorolytic 3'-5' exoribonuclease that plays an important role in tRNA 3'-end maturation. Removes nucleotide residues following the 3'-CCA terminus of tRNAs; can also add nucleotides to the ends of RNA molecules by using nucleoside diphosphates as substrates, but this may not be physiologically important. Probably plays a role in initiation of 16S rRNA degradation (leading to ribosome degradation) during starvation. The polypeptide is Ribonuclease PH (Tolumonas auensis (strain DSM 9187 / NBRC 110442 / TA 4)).